A 25-amino-acid polypeptide reads, in one-letter code: RSVCRQIKICRRRGGCYYKCTNRPY.

Disulfide bonds link Cys-4-Cys-20 and Cys-10-Cys-16.

It is found in the secreted. In terms of biological role, active against both bacteria (Gram-positive and Gram-negative) and filamentous fungi. Acts on the membrane of the bacterial cells. It destabilize a membrane by modifying its properties. The polypeptide is Androctonin (Androctonus australis (Sahara scorpion)).